The sequence spans 159 residues: Ribosomal RNA large subunit methyltransferase H (159 aa).

Residues leucine 76, glycine 108, and 127 to 132 each bind S-adenosyl-L-methionine; that span reads FSPMTF.

It belongs to the RNA methyltransferase RlmH family. As to quaternary structure, homodimer.

The protein resides in the cytoplasm. The enzyme catalyses pseudouridine(1915) in 23S rRNA + S-adenosyl-L-methionine = N(3)-methylpseudouridine(1915) in 23S rRNA + S-adenosyl-L-homocysteine + H(+). Specifically methylates the pseudouridine at position 1915 (m3Psi1915) in 23S rRNA. This chain is Ribosomal RNA large subunit methyltransferase H, found in Alkaliphilus oremlandii (strain OhILAs) (Clostridium oremlandii (strain OhILAs)).